We begin with the raw amino-acid sequence, 80 residues long: Exodeoxyribonuclease 7 small subunit (80 aa).

It belongs to the XseB family. Heterooligomer composed of large and small subunits.

The protein localises to the cytoplasm. The enzyme catalyses Exonucleolytic cleavage in either 5'- to 3'- or 3'- to 5'-direction to yield nucleoside 5'-phosphates.. Its function is as follows. Bidirectionally degrades single-stranded DNA into large acid-insoluble oligonucleotides, which are then degraded further into small acid-soluble oligonucleotides. In Pseudomonas fluorescens (strain SBW25), this protein is Exodeoxyribonuclease 7 small subunit.